A 117-amino-acid chain; its full sequence is Small ribosomal subunit protein eS25 (117 aa).

The disordered stretch occupies residues 1-34 (MPPKKDPKGGKAPPSKKKEGSGGGKAKKKKWSKG). Basic residues predominate over residues 25–34 (KAKKKKWSKG).

This sequence belongs to the eukaryotic ribosomal protein eS25 family.

In Caenorhabditis elegans, this protein is Small ribosomal subunit protein eS25 (rps-25).